We begin with the raw amino-acid sequence, 1320 residues long: Transcriptional activator MN1 (1320 aa).

N-acetylmethionine is present on methionine 1. Disordered stretches follow at residues methionine 1–threonine 26, phenylalanine 92–proline 121, proline 147–proline 219, leucine 231–isoleucine 411, serine 423–leucine 442, asparagine 474–leucine 615, serine 629–leucine 819, glycine 840–isoleucine 1150, and proline 1247–glutamine 1273. Residues histidine 98–histidine 113 are compositionally biased toward basic residues. Composition is skewed to low complexity over residues serine 202–serine 214 and glutamine 291–glutamine 309. Residues methionine 338–glycine 366 are compositionally biased toward pro residues. The segment covering phenylalanine 498–histidine 514 has biased composition (pro residues). Composition is skewed to low complexity over residues glutamine 523 to glutamine 550 and arginine 564 to leucine 578. 2 stretches are compositionally biased toward gly residues: residues glycine 582 to glycine 596 and glutamine 701 to glycine 710. The segment covering serine 759–serine 768 has biased composition (low complexity). Residues alanine 769–alanine 784 show a composition bias toward gly residues. Composition is skewed to low complexity over residues serine 798–serine 809 and glycine 895–glycine 905. Over residues aspartate 914 to asparagine 930 the composition is skewed to polar residues. A phosphoserine mark is found at serine 950 and serine 954. The span at glycine 973–alanine 984 shows a compositional bias: low complexity. Serine 1007 bears the Phosphoserine mark. A compositionally biased stretch (polar residues) spans glutamate 1048 to proline 1066. Serine 1081 bears the Phosphoserine mark. Gly residues predominate over residues tyrosine 1118–glycine 1128.

As to quaternary structure, interacts with PBX1, PKNOX1, ZBTB24, E2F7, RING1. In terms of tissue distribution, widely expressed in fetal and adult tissues. Highest expression is observed in fetal brain and skeletal muscle, and adult skeletal muscle.

The protein localises to the nucleus. In terms of biological role, transcriptional activator which specifically regulates expression of TBX22 in the posterior region of the developing palate. Required during later stages of palate development for growth and medial fusion of the palatal shelves. Promotes maturation and normal function of calvarial osteoblasts, including expression of the osteoclastogenic cytokine TNFSF11/RANKL. Necessary for normal development of the membranous bones of the skull. May play a role in tumor suppression. This chain is Transcriptional activator MN1 (MN1), found in Homo sapiens (Human).